A 102-amino-acid chain; its full sequence is Small ribosomal subunit protein uS10 (102 aa).

Belongs to the universal ribosomal protein uS10 family. Part of the 30S ribosomal subunit.

Involved in the binding of tRNA to the ribosomes. The protein is Small ribosomal subunit protein uS10 of Symbiobacterium thermophilum (strain DSM 24528 / JCM 14929 / IAM 14863 / T).